The following is a 454-amino-acid chain: Protein translocase subunit SecY (454 aa).

10 helical membrane passes run 43-63 (LTIA…LPYI), 97-117 (FTLG…AFVI), 144-164 (TLLL…AFIF), 168-188 (ILKL…ILWI), 201-221 (SSFL…GMSF), 226-246 (IFSF…WAAI), 289-309 (PVVF…YILL), 334-354 (IVEA…IIDP), 390-410 (LIGA…GFVF), and 414-434 (IFKG…TEIL).

The protein belongs to the SecY/SEC61-alpha family. Component of the plastid Sec protein translocase complex, which is composed of at least SecY and SecE.

The protein localises to the plastid. The protein resides in the chloroplast thylakoid membrane. In terms of biological role, the central subunit of the protein translocation channel SecYE. Consists of two halves formed by TMs 1-5 and 6-10. These two domains form a lateral gate at the front which open onto the bilayer between TMs 2 and 7, and are clamped together by SecE at the back. The channel is closed by both a pore ring composed of hydrophobic SecY resides and a short helix (helix 2A) on the extracellular side of the membrane which forms a plug. The protein is Protein translocase subunit SecY of Heterosigma akashiwo (strain NIES-293 / 8280G21-1).